The following is a 357-amino-acid chain: Glucose-6-phosphatase catalytic subunit 1 (357 aa).

Residues 1-28 (MEEGMNILHDFGIQSTRYLQVNYQDSQD) lie on the Lumenal side of the membrane. A helical transmembrane segment spans residues 29-49 (WFILVSVIADLRNAFYVLFPI). At 50–60 (WFHLKETVGIN) the chain is on the cytoplasmic side. Residues 61–81 (LLWVAVVGDWFNLVFKWILFG) traverse the membrane as a helical segment. Topologically, residues 82 to 117 (QRPYWWVLDTDYYSNSSVPIIKQFPVTCETGPGSPS) are lumenal. Arg-83 is a substrate binding site. Residue Asn-96 is glycosylated (N-linked (GlcNAc...) asparagine). Residues 118-138 (GHAMGAAGVYYVMVTSTLAIF) form a helical membrane-spanning segment. His-119 serves as the catalytic Proton donor. Residues 139–147 (RGKKKPTYG) are Cytoplasmic-facing. Residues 148-168 (FRCLNVILWLGFWAVQLNVCL) traverse the membrane as a helical segment. The Lumenal segment spans residues 169–179 (SRIYLAAHFPH). Residue Arg-170 participates in substrate binding. His-176 functions as the Nucleophile in the catalytic mechanism. A helical transmembrane segment spans residues 180 to 202 (QVVAGVLSGIAVAETFSHIRGIY). Residues 203–211 (NASLRKYCL) lie on the Cytoplasmic side of the membrane. Residues 212 to 232 (ITIFLFGFALGFYLLLKGLGV) form a helical membrane-spanning segment. The Lumenal portion of the chain corresponds to 233-254 (DLLWTLEKAKRWCERPEWVHLD). The helical transmembrane segment at 255–275 (TTPFASLFKNLGTLLGLGLAL) threads the bilayer. At 276 to 291 (NSSMYRKSCKGELSKL) the chain is on the cytoplasmic side. The helical transmembrane segment at 292 to 312 (LPFRFACIVASLVLLHLFDSL) threads the bilayer. Residues 313-320 (KPPSQVEL) lie on the Lumenal side of the membrane. A helical membrane pass occupies residues 321–341 (IFYILSFCKSATVPFASVSLI). The Cytoplasmic portion of the chain corresponds to 342–357 (PYCLARILGQTHKKSL). The short motif at 354–357 (KKSL) is the Prevents secretion from ER element.

The protein belongs to the glucose-6-phosphatase family. As to expression, liver and kidney.

The protein resides in the endoplasmic reticulum membrane. It carries out the reaction D-glucose 6-phosphate + H2O = D-glucose + phosphate. Its pathway is carbohydrate biosynthesis; gluconeogenesis. Functionally, hydrolyzes glucose-6-phosphate to glucose in the endoplasmic reticulum. Forms with the glucose-6-phosphate transporter (SLC37A4/G6PT) the complex responsible for glucose production in the terminal step of glycogenolysis and gluconeogenesis. Hence, it is the key enzyme in homeostatic regulation of blood glucose levels. The protein is Glucose-6-phosphatase catalytic subunit 1 (G6pc1) of Mus musculus (Mouse).